The primary structure comprises 2328 residues: MNTTDCFIALVHAIREIKTHFFSRYTGRMEFTLHNGEKKIFYSRPNNHDNCWLNTILQLFRYVDEPFFDWVYNSPENLTLSAIEQLEKLTGLELREGGPPALVIWNIKHLLHTGIGTASRPSEVCMVDGTDMCLADFHAGIFLKGQEHAVFACVTSDGWYAIDDEDFYPWTPDPSDVLVFVPYDQEPLNGGWKANVQRKLKGAGQSSPATGSQNQSGNTGSIINNYYMQQYQNSMDTQLGDNAISGGSNEGSTDTTSTHTTNTQNNDWFSKLASSAFSGLFGALLADKKTEETTLLEDRILTTRNGHTTSTTQSSVGVTYGYATTEDSTSGPNTSGLETRVHQAERFFKMTLFEWVPSQSFGHMHKVVLPSEPKGVYGGLVKSYAYMRNGWDVEVTAVGNQFNGGCLLVALVPEMGDISDREKYQLTLYPHQFINPRTNMTAHITVPYVGVNRYDQYNQHKPWTLVVMVVAPLTVNTSGAQQIKVYANIAPTNVHVAGELPSKEGIFPVACADGYGNMVTTDPKTADPAYGKVYNPPRTALPGRFTNYLDVAEACPTLLTFENVPYVSTRTDGQRLLAKFDVSLAAKHMSNTYLAGLAQYYTQYAGTINLHFMFTGPTDAKARYMVAYVPPGMEAPDNPEEAAHCIHAEWDTGLNSKFTFSIPYISAADYAYTASSEAETTSVQGWVCVYQITHGKADADALVVSASAGKDFELRLPVDARQQTTTTGESADPVTTTVENYGGETQTQRRHHTDVAFVLDRFVKVQVSGNQHTLDVMQVHKDSIVGALLRAATYYFSDLEIAVTHTGKLTWVPNGAPVSALDNTTNPTAYHKGPLTRLALPYTAPHRVLATAYTGTTAYTTGVRRGDLAHLAAAHARHLPTSFNFGAVKAETITELLVRMKRAELYCPRPVLPVQPAGDRHKQPLIAPAKQLLNFDLLKLAGDVESNPGPFFFSDVRSNFSKLVETINQMQEDMSTKHGPDFNRLVSAFEELATGVKAIRTGLDEAKPWYKLIKLLSRLSCMAAVAARSKDPVLVAIMLADTGLEILDSTFVVKKISDSLSSLFHVPAPVFSFGAPILLAGLVKVASSFFRSTPEDLERAEKQLKARDINDIFAILKNGEWLVKLILAIRDWIKAWIASEEKFVTMTDLVPGILEKQRDLNDPSKYKEAKEWLDNARQACLKNGNTHIANLCKVVAPAPSKSRPEPVVVCLRGKSGQGKSFLANVLAQAISTHFTGRTDSVWYCPPDPDHFDGYNQQTVVVMDDLGQNPDGKDFKYFAQMVSTTGFIPPMASLEDKGKPFNSKVIIATTNLYSGFTPRTMVCPDALNRRFHFDIDVSAKDGYKINNKLDIIKALEDTHTNPVAMFQYDCALLNGMAVEMKRMQQDMFKPQPPLQNVYQLVQEVIERVELHEKVSSHPIFKQISIPSQKSVLYFLIEKGQHEAAIEFFEGMVHDSIKEELRPLIQQTSFVKRAFKRLKENFEIVALCLTLLANIVIMIRETRKRQQMVDDAVNEYIEKANITTDDKTLDEAEKNPLETSGASTVGFRERTLPGHKARDDVNSEPAQPVEEQPQAEGPYAGPLERQKPLKVRAKLPQQEGPYAGPMERQKPLKVKAKAPVVKEGPYEGPVKKPVALKVKAKNLIVTESGAPPTDLQKMVMGNTKPVELILDGKTVAICCATGVFGTAYLVPRHLFAEKYDKIMLDGRAMTDSDYRVFEFEIKVKGQDMLSDAALMVLHRGNRVRDITKHFRDTARMKKGTPVVGVINNADVGRLIFSGEALTYKDIVVCMDGDTMPGLFAYRAATKAGYCGGAVLAKDGADTFIVGTHSAGGNGVGYCSCVSRSMLLKMKAHIDPEPHHEGLIVDTRDVEERVHVMRKTKLAPTVAHGVFNPDFGPAALSNRDPRLNEGVVLDEVIFSKHKGDTKMSEEDKALFRRCAADYASRLHSVLGTANAPLSIYEAIKGVDGLDAMEPDTAPGLPWALQGKRRGALIDFENGTVGPEVEAALKLMEKREYKFACQTFLKDEIRPMEKVRAGKTRIVDVLPVEHILYTRMMIGRFCAQMHSNNGPQIGSAVGCNPDVDWQRFGTHFAQYRNVWDVDYSAFDANHCSDAMNIMFEEVFRTEFGFHPNAEWILKTLVNTEHAYENKRITVEGGMPSGCSATSIINTILNNIYVLYALRRHYEGVELDTYTMISYGDDIVVASDYDLDFEALKPHFKSIGQTITPADKSDKGFVLGHSITDVTFLKRHFHMDYGTGFYKPVMASKTLEAILSFARRGTIQEKLISVAGLAVHSGPDEYRRLFEPFQGLFEIPSYRSLYLRWVNAVCGDA.

A Peptidase C28 domain is found at 1 to 201; it reads MNTTDCFIAL…WKANVQRKLK (201 aa). Residues 1–1476 are Cytoplasmic-facing; the sequence is MNTTDCFIAL…SFVKRAFKRL (1476 aa). Residues cysteine 51, histidine 148, and aspartate 163 each act as for leader protease activity in the active site. Disordered stretches follow at residues 199–218 and 238–265; these read KLKG…QSGN and QLGD…NTQN. Glycine 202 is lipidated: N-myristoyl glycine; by host. Polar residues-rich tracts occupy residues 204–218 and 238–251; these read GQSS…QSGN and QLGD…SNEG. Residues 252 to 265 are compositionally biased toward low complexity; it reads STDTTSTHTTNTQN. The segment at 787–795 is antigenic epitope; that stretch reads ALLRAATYY. The Cell attachment site motif lies at 865–867; that stretch reads RGD. One can recognise an SF3 helicase domain in the interval 1185-1349; it reads NTHIANLCKV…DGYKINNKLD (165 aa). Position 1213–1220 (1213–1220) interacts with ATP; that stretch reads GKSGQGKS. An intramembrane segment occupies 1477 to 1497; that stretch reads KENFEIVALCLTLLANIVIMI. Over 1498–2328 the chain is Cytoplasmic; sequence RETRKRQQMV…RWVNAVCGDA (831 aa). 2 stretches are compositionally biased toward basic and acidic residues: residues 1525–1534 and 1545–1559; these read KTLDEAEKNP and FRER…RDDV. Positions 1525 to 1580 are disordered; that stretch reads KTLDEAEKNPLETSGASTVGFRERTLPGHKARDDVNSEPAQPVEEQPQAEGPYAGP. 3 positions are modified to O-(5'-phospho-RNA)-tyrosine: tyrosine 1577, tyrosine 1600, and tyrosine 1624. Positions 1648–1844 constitute a Peptidase C3 domain; that stretch reads APPTDLQKMV…YCSCVSRSML (197 aa). Histidine 1691 (for protease 3C activity; Proton donor/acceptor) is an active-site residue. Residues aspartate 1729 and cysteine 1808 each act as for protease 3C activity in the active site. Residues 1874 to 1882 carry the Nuclear localization signal motif; sequence MRKTKLAPT. The region spanning 2092–2210 is the RdRp catalytic domain; sequence RNVWDVDYSA…ASDYDLDFEA (119 aa). Aspartate 2196 serves as the catalytic For RdRp activity.

This sequence belongs to the picornaviruses polyprotein family. Interacts with host ISG15. In terms of assembly, interacts (via R-G-D motif) with host ITGAV/ITGB6. Interacts with host MAVS; this interaction inhibits binding of host TRAF3 to MAVS, thereby suppressing interferon-mediated responses. As to quaternary structure, forms homooligomers. Homohexamer. Interacts with host VIM. Interacts with host BECN1. In terms of assembly, interacts with host DCTN3. As to quaternary structure, interacts with RNA-dependent RNA polymerase; this interaction allows 3B-1 to binds 2 polymerases and act as a primer. It also allows the recruitment of the RNA-dependent RNA polymerase to host membranes. Interacts with RNA-dependent RNA polymerase; this interaction allows 3B-2 to act as a primer. In terms of assembly, interacts with RNA-dependent RNA polymerase; this interaction allows 3B-3 to act as a primer. As to quaternary structure, interacts with 3B-1; this interaction allows 3B-1 to binds 2 polymerases and act as a primer. It also allows the recruitment of the RNA-dependent RNA polymerase to host membranes. Interacts with 3B-2; this interaction allows 3B-2 to act as a primer. Interacts with 3B-3; this interaction allows 3B-3 to act as a primer. Post-translationally, removes six residues from its own C-terminus, generating sLb(pro). In terms of processing, specific enzymatic cleavages in vivo by the viral proteases yield a variety of precursors and mature proteins. The polyprotein seems to be cotranslationally cleaved at the 2A/2B junction by a ribosomal skip from one codon to the next without formation of a peptide bond. This process would release the L-P1-2A peptide from the translational complex. During virion maturation, immature virions are rendered infectious following cleavage of VP0 into VP4 and VP2. This maturation seems to be an autocatalytic event triggered by the presence of RNA in the capsid and is followed by a conformational change of the particle. Post-translationally, myristoylation is required during RNA encapsidation and formation of the mature virus particle. In terms of processing, uridylylated by the polymerase and covalently linked to the 5'-end of genomic RNA. These uridylylated forms act as a nucleotide-peptide primer for the polymerase.

Its subcellular location is the host nucleus. It is found in the host cytoplasm. It localises to the virion. The protein resides in the host endoplasmic reticulum membrane. The protein localises to the host cytoplasmic vesicle membrane. The catalysed reaction is Autocatalytically cleaves itself from the polyprotein of the foot-and-mouth disease virus by hydrolysis of a Lys-|-Gly bond, but then cleaves host cell initiation factor eIF-4G at bonds -Gly-|-Arg- and -Lys-|-Arg-.. It catalyses the reaction a ribonucleoside 5'-triphosphate + H2O = a ribonucleoside 5'-diphosphate + phosphate + H(+). It carries out the reaction RNA(n) + a ribonucleoside 5'-triphosphate = RNA(n+1) + diphosphate. The enzyme catalyses Selective cleavage of Gln-|-Gly bond in the poliovirus polyprotein. In other picornavirus reactions Glu may be substituted for Gln, and Ser or Thr for Gly.. In terms of biological role, autocatalytically cleaves itself from the polyprotein at the L/VP0 junction. Also cleaves the host translation initiation factors EIF4G1 and EIF4G3, in order to shut off the capped cellular mRNA transcription. Plays a role in counteracting host innate antiviral response using diverse mechanisms. Possesses a deubiquitinase activity acting on both 'Lys-48' and 'Lys-63'-linked polyubiquitin chains. In turn, inhibits the ubiquitination and subsequent activation of key signaling molecules of type I IFN response such as host RIGI, TBK1, TRAF3 and TRAF6. Inhibits host NF-kappa-B activity by inducing a decrease in RELA mRNA levels. Cleaves a peptide bond in the C-terminus of host ISG15, resulting in the damaging of this modifier that can no longer be attached to target proteins. Also cleaves host G3BP1 and G3BP2 in order to inhibit cytoplasmic stress granules assembly. Functionally, lies on the inner surface of the capsid shell. After binding to the host receptor, the capsid undergoes conformational changes. Capsid protein VP4 is released, capsid protein VP1 N-terminus is externalized, and together, they shape a pore in the host membrane through which the viral genome is translocated into the host cell cytoplasm. After genome has been released, the channel shrinks. Its function is as follows. Forms an icosahedral capsid of pseudo T=3 symmetry with capsid proteins VP1 and VP3. The capsid is composed of 60 copies of each capsid protein organized in the form of twelve pentamers and encloses the viral positive strand RNA genome. Upon acidifcation in the endosome, dissociates into pentamers. Forms an icosahedral capsid of pseudo T=3 symmetry with capsid proteins VP0 and VP3. The capsid is composed of 60 copies of each capsid protein organized in the form of twelve pentamers and encloses the viral positive strand RNA genome. Upon acidifcation in the endosome, dissociates into pentamers. In terms of biological role, forms an icosahedral capsid of pseudo T=3 symmetry with capsid proteins VP2 and VP3. The capsid is composed of 60 copies of each capsid protein organized in the form of twelve pentamers and encloses the viral positive strand RNA genome. Mediates cell entry by attachment to an integrin receptor, usually host ITGAV/ITGB6. In addition, targets host MAVS to suppress type I IFN pathway. Upon acidifcation in the endosome, dissociates into pentamers. Functionally, mediates self-processing of the polyprotein by a translational effect termed 'ribosome skipping'. Mechanistically, 2A-mediated cleavage occurs between the C-terminal glycine and the proline of the downstream protein 2B. In the case of foot-and-mouth disease virus, the 2A oligopeptide is post-translationally 'trimmed' from the C-terminus of the upstream protein 1D by 3C proteinase. Its function is as follows. Plays an essential role in the virus replication cycle by acting as a viroporin. Creates a pore in the host endoplasmic reticulum and as a consequence releases Ca2+ in the cytoplasm of infected cell. In turn, high levels of cytoplasmic calcium may trigger membrane trafficking and transport of viral ER-associated proteins to viroplasms, sites of viral genome replication. Associates with and induces structural rearrangements of intracellular membranes. Triggers host autophagy by interacting with host BECN1 and thereby promotes viral replication. Participates in viral replication and interacts with host DHX9. Displays RNA-binding, nucleotide binding and NTPase activities. May play a role in virion morphogenesis and viral RNA encapsidation by interacting with the capsid protein VP3. In terms of biological role, plays important roles in virus replication, virulence and host range. Cooperates with host DDX56 to inhibit IRF3 nuclear translocation and subsequent type I interferon production. Functionally, covalently linked to the 5'-end of both the positive-strand and negative-strand genomic RNAs. Acts as a genome-linked replication primer. Its function is as follows. Cysteine protease that generates mature viral proteins from the precursor polyprotein. In addition to its proteolytic activity, binds to viral RNA and thus influences viral genome replication. RNA and substrate bind cooperatively to the protease. RNA-directed RNA polymerase 3D-POL replicates genomic and antigenomic RNA by recognizing replications specific signals. Covalently attaches UMP to a tyrosine of VPg, which is used to prime RNA synthesis. The positive stranded RNA genome is first replicated at virus induced membranous vesicles, creating a dsRNA genomic replication form. This dsRNA is then used as template to synthesize positive stranded RNA genomes. ss(+)RNA genomes are either translated, replicated or encapsidated. This chain is Genome polyprotein, found in Bos taurus (Bovine).